The sequence spans 430 residues: Aspartate aminotransferase, mitochondrial (430 aa).

The transit peptide at 1 to 29 (MALLHSARVLSGVASAFHPGLAAAASARA) directs the protein to the mitochondrion. At threonine 48 the chain carries Phosphothreonine. Lysine 59 carries the post-translational modification N6-acetyllysine. A substrate-binding site is contributed by glycine 65. N6-acetyllysine; alternate is present on lysine 73. Lysine 73 bears the N6-succinyllysine; alternate mark. Lysine 82 is modified (N6-acetyllysine). At lysine 90 the chain carries N6-acetyllysine; alternate. Lysine 90 carries the post-translational modification N6-succinyllysine; alternate. Tyrosine 96 carries the post-translational modification 3'-nitrotyrosine; alternate. Position 96 is a phosphotyrosine; alternate (tyrosine 96). Position 122 is an N6-acetyllysine; alternate (lysine 122). Lysine 122 is modified (N6-succinyllysine; alternate). Serine 143 bears the Phosphoserine mark. N6-acetyllysine; alternate is present on lysine 159. Lysine 159 is subject to N6-succinyllysine; alternate. Tryptophan 162 contacts substrate. The residue at position 185 (lysine 185) is an N6-acetyllysine; alternate. Position 185 is an N6-succinyllysine; alternate (lysine 185). Substrate is bound at residue asparagine 215. Lysine 227 carries the post-translational modification N6-succinyllysine. N6-acetyllysine is present on lysine 234. Lysine 279 and lysine 296 each carry N6-acetyllysine; alternate. An N6-(pyridoxal phosphate)lysine; alternate modification is found at lysine 279. An N6-succinyllysine; alternate modification is found at lysine 296. Position 302 is an N6-acetyllysine (lysine 302). N6-acetyllysine; alternate is present on lysine 309. Lysine 309 bears the N6-succinyllysine; alternate mark. At arginine 313 the chain carries Asymmetric dimethylarginine. Lysine 338 is subject to N6-acetyllysine; alternate. Lysine 338 bears the N6-succinyllysine; alternate mark. Residue lysine 345 is modified to N6-acetyllysine. Lysine 363 carries the N6-acetyllysine; alternate modification. Lysine 363 bears the N6-succinyllysine; alternate mark. 2 positions are modified to N6-acetyllysine: lysine 364 and lysine 387. 2 positions are modified to N6-acetyllysine; alternate: lysine 396 and lysine 404. Residues lysine 396 and lysine 404 each carry the N6-succinyllysine; alternate modification. Residue arginine 407 coordinates substrate.

The protein belongs to the class-I pyridoxal-phosphate-dependent aminotransferase family. In terms of assembly, homodimer. The cofactor is pyridoxal 5'-phosphate.

Its subcellular location is the mitochondrion matrix. The protein resides in the cell membrane. It catalyses the reaction L-aspartate + 2-oxoglutarate = oxaloacetate + L-glutamate. It carries out the reaction L-kynurenine + 2-oxoglutarate = kynurenate + L-glutamate + H2O. Its function is as follows. Catalyzes the irreversible transamination of the L-tryptophan metabolite L-kynurenine to form kynurenic acid (KA). As a member of the malate-aspartate shuttle, it has a key role in the intracellular NAD(H) redox balance. Is important for metabolite exchange between mitochondria and cytosol, and for amino acid metabolism. Facilitates cellular uptake of long-chain free fatty acids. This chain is Aspartate aminotransferase, mitochondrial (GOT2), found in Oryctolagus cuniculus (Rabbit).